We begin with the raw amino-acid sequence, 425 residues long: Enolase (425 aa).

(2R)-2-phosphoglycerate is bound at residue Gln163. Residue Glu205 is the Proton donor of the active site. Residues Asp242, Glu285, and Asp312 each coordinate Mg(2+). The (2R)-2-phosphoglycerate site is built by Lys337, Arg366, Ser367, and Lys388. The Proton acceptor role is filled by Lys337.

Belongs to the enolase family. Requires Mg(2+) as cofactor.

The protein localises to the cytoplasm. Its subcellular location is the secreted. It localises to the cell surface. The enzyme catalyses (2R)-2-phosphoglycerate = phosphoenolpyruvate + H2O. The protein operates within carbohydrate degradation; glycolysis; pyruvate from D-glyceraldehyde 3-phosphate: step 4/5. Its function is as follows. Catalyzes the reversible conversion of 2-phosphoglycerate (2-PG) into phosphoenolpyruvate (PEP). It is essential for the degradation of carbohydrates via glycolysis. The chain is Enolase from Jannaschia sp. (strain CCS1).